Consider the following 433-residue polypeptide: Peptidoglycan DD-endopeptidase ShyC (433 aa).

A helical membrane pass occupies residues 10 to 30; it reads WLHRVLITAFSAIIVFAIFFL. Zn(2+)-binding residues include H299, D303, and H380.

It belongs to the peptidase M23B family. Zn(2+) serves as cofactor.

The protein resides in the cell inner membrane. Its pathway is cell wall degradation; peptidoglycan degradation. Reduced activity in 0.5 mM EDTA and a complete loss of activity at higher EDTA concentrations. In terms of biological role, cell wall peptidoglycan (PG) DD-endopeptidase. Hydrolyzes peptide cross-links which covalently connect adjacent PG strands probably to allow insertion of new glycans and thus cell wall expansion. Degrades purified whole PG sacculi in vitro. This chain is Peptidoglycan DD-endopeptidase ShyC, found in Vibrio cholerae serotype O1 (strain ATCC 39315 / El Tor Inaba N16961).